The primary structure comprises 458 residues: UDP-N-acetylmuramoylalanine--D-glutamate ligase (458 aa).

124–130 is an ATP binding site; it reads GSDGKTT.

This sequence belongs to the MurCDEF family.

It is found in the cytoplasm. The enzyme catalyses UDP-N-acetyl-alpha-D-muramoyl-L-alanine + D-glutamate + ATP = UDP-N-acetyl-alpha-D-muramoyl-L-alanyl-D-glutamate + ADP + phosphate + H(+). The protein operates within cell wall biogenesis; peptidoglycan biosynthesis. Functionally, cell wall formation. Catalyzes the addition of glutamate to the nucleotide precursor UDP-N-acetylmuramoyl-L-alanine (UMA). The chain is UDP-N-acetylmuramoylalanine--D-glutamate ligase from Clostridium perfringens (strain 13 / Type A).